Here is a 152-residue protein sequence, read N- to C-terminus: Histone H2B.9 (152 aa).

2 stretches are compositionally biased toward basic and acidic residues: residues 1-16 and 34-52; these read MAPKAEKKPAAKKPAE and EKRLPAGKGEKGGAGEGKK. Residues 1–59 are disordered; that stretch reads MAPKAEKKPAAKKPAEEEPAAEKAPAAGKKPKAEKRLPAGKGEKGGAGEGKKAGRKKGK. 2 positions are modified to N6-acetyllysine: Lys7 and Lys35. Residue Lys148 forms a Glycyl lysine isopeptide (Lys-Gly) (interchain with G-Cter in ubiquitin) linkage.

This sequence belongs to the histone H2B family. As to quaternary structure, the nucleosome is a histone octamer containing two molecules each of H2A, H2B, H3 and H4 assembled in one H3-H4 heterotetramer and two H2A-H2B heterodimers. The octamer wraps approximately 147 bp of DNA. In terms of processing, can be acetylated to form H2BK6ac and H2BK33ac. Post-translationally, monoubiquitinated by BRE1 to form H2BK143ub1 and deubiquitinated by UBP26. Required for heterochromatic histone H3 di- and trimethylation at H3K4me. May give a specific tag for epigenetic transcriptional activation.

It localises to the nucleus. Its subcellular location is the chromosome. Its function is as follows. Core component of nucleosome. Nucleosomes wrap and compact DNA into chromatin, limiting DNA accessibility to the cellular machineries which require DNA as a template. Histones thereby play a central role in transcription regulation, DNA repair, DNA replication and chromosomal stability. DNA accessibility is regulated via a complex set of post-translational modifications of histones, also called histone code, and nucleosome remodeling. This chain is Histone H2B.9 (H2B.9), found in Oryza sativa subsp. indica (Rice).